Reading from the N-terminus, the 957-residue chain is Glycine dehydrogenase (decarboxylating) (957 aa).

Lys-708 is modified (N6-(pyridoxal phosphate)lysine).

This sequence belongs to the GcvP family. In terms of assembly, the glycine cleavage system is composed of four proteins: P, T, L and H. Pyridoxal 5'-phosphate serves as cofactor.

The catalysed reaction is N(6)-[(R)-lipoyl]-L-lysyl-[glycine-cleavage complex H protein] + glycine + H(+) = N(6)-[(R)-S(8)-aminomethyldihydrolipoyl]-L-lysyl-[glycine-cleavage complex H protein] + CO2. In terms of biological role, the glycine cleavage system catalyzes the degradation of glycine. The P protein binds the alpha-amino group of glycine through its pyridoxal phosphate cofactor; CO(2) is released and the remaining methylamine moiety is then transferred to the lipoamide cofactor of the H protein. The chain is Glycine dehydrogenase (decarboxylating) from Salmonella agona (strain SL483).